The chain runs to 102 residues: Protamine-2 (102 aa).

Phosphoserine is present on residues Ser-8, Ser-10, and Ser-37. The disordered stretch occupies residues 16-102 (VYGQQLRGQE…RTRRRRCRRH (87 aa)). The span at 49–102 (GHSHYRRRHCSRRRLHRIHRQQHRSCGRRRRRSCRQRRRHRRGCRTRRRRCRRH) shows a compositional bias: basic residues.

The protein belongs to the protamine P2 family. Interacts with TDRP. Post-translationally, proteolytic processing into mature chains is required for histone eviction during spermatogenesis. Transition proteins (TNP1 and TNP2) are required for processing. In terms of tissue distribution, testis.

Its subcellular location is the nucleus. It localises to the chromosome. Protamines substitute for histones in the chromatin of sperm during the haploid phase of spermatogenesis. They compact sperm DNA into a highly condensed, stable and inactive complex. This is Protamine-2 (PRM2) from Hylobates lar (Lar gibbon).